The sequence spans 501 residues: NAD(P)H-quinone oxidoreductase subunit 2, chloroplastic (501 aa).

14 helical membrane passes run 15–35 (ILPE…DLTF), 40–60 (TIWL…ILLF), 82–102 (IFQS…IEYI), 107–127 (MAIP…MFLC), 132–152 (LVTI…LCGY), 167–187 (LLIG…LYGL), 212–232 (TFIA…LVPF), 244–264 (PTPV…ALAT), 278–298 (WKIF…LVAI), 307–327 (LAYS…TGDL), 333–353 (MTIY…CIIL), 378–398 (FSLT…GFFG), 410–430 (GFYL…YYYL), and 466–486 (FVMI…NPIF).

Belongs to the complex I subunit 2 family. NDH is composed of at least 16 different subunits, 5 of which are encoded in the nucleus.

It is found in the plastid. The protein resides in the chloroplast thylakoid membrane. It catalyses the reaction a plastoquinone + NADH + (n+1) H(+)(in) = a plastoquinol + NAD(+) + n H(+)(out). The enzyme catalyses a plastoquinone + NADPH + (n+1) H(+)(in) = a plastoquinol + NADP(+) + n H(+)(out). NDH shuttles electrons from NAD(P)H:plastoquinone, via FMN and iron-sulfur (Fe-S) centers, to quinones in the photosynthetic chain and possibly in a chloroplast respiratory chain. The immediate electron acceptor for the enzyme in this species is believed to be plastoquinone. Couples the redox reaction to proton translocation, and thus conserves the redox energy in a proton gradient. This Marchantia polymorpha (Common liverwort) protein is NAD(P)H-quinone oxidoreductase subunit 2, chloroplastic.